The chain runs to 631 residues: MLRGGCKASEKRRHLSESLSWQQDQALSSSIYLLRQIGPTGFLLKEEEPEKGDFRVLLGNPHECSCPTFLKRGELCKHICWVLLKKFKLPRNHESAFQLGLTEGEINDLLRGIHQVQAPQLRASDETAQVEEDGYLKQKDINAGDICPICQEVLLEKKLPVTFCRFGCGNNVHIKCMRILANYQDTGSDSSVLRCPLCREEFAPLKVILEEFKNSNKLITISEKERLDKHLGIPCNNCNQLPIEGRCYKCTECVEYHLCQECFDSCCHSSHAFASREKRNQRWRSVEKRSEVMKYLNTENEGEAKPGCFQEKQGQFYTPKHVVKSLPLLMITKKSKLLAPGYQCRLCLKSFSFGQYTRLLPCTHKFHRKCIDNWLLHKCNSCPIDRQVIYNPLIWKGIATDGQAHQLASSKDIACLSKQQEPKLFIPGTGLVLKGKRMGVLPSIPQYNSKVLTTLQNPSDNYQNITMDDLCSVKLDNSNSRKLVFGYKISKQFPTYLKNPTTGQTPSQTFLPSLPHKNIICLTGRESPHIYEKDHIGQSQKTSRGYEHINYNTRKSLGSRLRQHKRSSALSSEDLNLTINLGTTKLSLSKRQNNSMGKVRQKLGHPPRRPAYPPLQTQNAALSLIMQGIQL.

An SWIM-type zinc finger spans residues 54–87 (FRVLLGNPHECSCPTFLKRGELCKHICWVLLKKF). The segment at 139–348 (KDINAGDICP…APGYQCRLCL (210 aa)) is UBE2D1-binding. The RING-type 1 zinc finger occupies 147-199 (CPICQEVLLEKKLPVTFCRFGCGNNVHIKCMRILANYQDTGSDSSVLRCPLCR). Residues 230 to 281 (HLGIPCNNCNQLPIEGRCYKCTECVEYHLCQECFDSCCHSSHAFASREKRNQ) form a ZZ-type zinc finger. Residues C235, C238, C250, C253, C259, C262, H268, and H271 each contribute to the Zn(2+) site. Residues 344–386 (CRLCLKSFSFGQYTRLLPCTHKFHRKCIDNWLLHKCNSCPIDR) form an RING-type 2 zinc finger. A disordered region spans residues 589–614 (SKRQNNSMGKVRQKLGHPPRRPAYPP). The segment covering 599–608 (VRQKLGHPPR) has biased composition (basic residues).

In terms of assembly, dimer. Interacts with UBE2D1. Post-translationally, polyubiquitinated. Polyubiquitination is followed by degradation via the proteasome. Expressed only in testis.

It carries out the reaction S-ubiquitinyl-[E2 ubiquitin-conjugating enzyme]-L-cysteine + [acceptor protein]-L-lysine = [E2 ubiquitin-conjugating enzyme]-L-cysteine + N(6)-ubiquitinyl-[acceptor protein]-L-lysine.. Functionally, E3 ubiquitin-protein ligase involved in the regulation of Fas-, DR3- and DR4-mediated apoptosis. Functions in conjunction with the UBE2D1, UBE2D3 and UBE2E1 E2 ubiquitin-conjugating enzymes. In Mus musculus (Mouse), this protein is E3 ubiquitin-protein ligase Zswim2 (Zswim2).